The chain runs to 1178 residues: Dual specificity mitogen-activated protein kinase kinase hemipterous (1178 aa).

Disordered regions lie at residues 74–103 (SGSG…SSSS) and 115–148 (ATGT…GGGL). Low complexity-rich tracts occupy residues 91 to 103 (ATPF…SSSS) and 115 to 128 (ATGT…PPTT). A Protein kinase domain is found at 197–456 (LKHLGDLGNG…YPELLAQPFI (260 aa)). ATP is bound by residues 203-211 (LGNGTSGNV) and Lys226. Residue Asp320 is the Proton acceptor of the active site. At Ser348 the chain carries Phosphoserine. Thr352 bears the Phosphothreonine mark. The tract at residues 522–648 (TYAGQSPTNP…DESPKKESMF (127 aa)) is disordered. The span at 523 to 543 (YAGQSPTNPQKTIKPTQIPSY) shows a compositional bias: polar residues. Positions 544-570 (QQQQSQFFMQSATQLPQTTTTTPTATT) are enriched in low complexity. The segment covering 574–593 (GGSGNGNGRGNGSGGSGNGS) has biased composition (gly residues). Residues 594-608 (GSSSSASPLSPPSAG) show a composition bias toward low complexity. Residues 636-646 (KYNDESPKKES) are compositionally biased toward basic and acidic residues. Ser646 and Ser662 each carry phosphoserine. 6 disordered regions span residues 715–783 (TTTP…LQPG), 797–851 (QNQL…STCS), 912–933 (GTSP…GNGN), 999–1026 (TSPV…VVNN), 1042–1108 (SSSS…NRGQ), and 1122–1178 (GQPP…TIDQ). Residues 724 to 734 (TENSQAYDSCD) show a composition bias toward polar residues. 3 stretches are compositionally biased toward low complexity: residues 735-783 (SSSN…LQPG), 808-817 (RYQQQRQQPP), and 837-851 (THST…STCS). The span at 912 to 928 (GTSPTLQSRSPEQQSDY) shows a compositional bias: polar residues. A compositionally biased stretch (low complexity) spans 1042-1055 (SSSSNTSQSTSPTT). Phosphoserine occurs at positions 1150 and 1154. Residues 1168-1178 (PQRRIYRTIDQ) are compositionally biased toward basic and acidic residues.

It belongs to the protein kinase superfamily. STE Ser/Thr protein kinase family. MAP kinase kinase subfamily. In terms of processing, MAPKK is itself dependent on Ser/Thr phosphorylation for activity catalyzed by MAP kinase kinase kinases. Post-translationally, weakly autophosphorylated.

It catalyses the reaction L-seryl-[protein] + ATP = O-phospho-L-seryl-[protein] + ADP + H(+). The enzyme catalyses L-threonyl-[protein] + ATP = O-phospho-L-threonyl-[protein] + ADP + H(+). It carries out the reaction L-tyrosyl-[protein] + ATP = O-phospho-L-tyrosyl-[protein] + ADP + H(+). In terms of biological role, required for the epithelial cell sheet movement called dorsal closure (DC), which allows establishment of the dorsal epidermis. Controls the expression in the dorsal epithelium edges of another dorsal closure gene, puckered (puc). Phosphorylates and activates the MAP kinase bsk; bsk signal transduction pathway mediates an immune response and morphogenesis. This Drosophila melanogaster (Fruit fly) protein is Dual specificity mitogen-activated protein kinase kinase hemipterous (hep).